Consider the following 86-residue polypeptide: Small ribosomal subunit protein bS18 (86 aa).

The protein belongs to the bacterial ribosomal protein bS18 family. As to quaternary structure, part of the 30S ribosomal subunit. Forms a tight heterodimer with protein bS6.

Functionally, binds as a heterodimer with protein bS6 to the central domain of the 16S rRNA, where it helps stabilize the platform of the 30S subunit. The sequence is that of Small ribosomal subunit protein bS18 from Campylobacter curvus (strain 525.92).